Reading from the N-terminus, the 394-residue chain is Flavin-dependent monooxygenase, oxygenase subunit HsaA (394 aa).

FMN-binding positions include tryptophan 84, 118–120 (SSY), 141–143 (WSS), arginine 263, 346–347 (AT), and 368–369 (HA).

It belongs to the HpaH/HsaA monooxygenase family. As to quaternary structure, homotetramer under anaerobic conditions. HsaAB monooxygenase consists of an oxygenase component HsaA and a reductase component HsaB.

The enzyme catalyses 3-hydroxy-9,10-secoandrosta-1,3,5(10)-triene-9,17-dione + FMNH2 + O2 = 3,4-dihydroxy-9,10-secoandrosta-1,3,5(10)-triene-9,17-dione + FMN + H2O + H(+). Its pathway is lipid metabolism; steroid biosynthesis. In terms of biological role, catalyzes the o-hydroxylation of 3-hydroxy-9,10-secoandrosta-1,3,5(10)-triene-9,17-dione (3-HSA) to 3,4-dihydroxy-9,10-secoandrosta-1,3,5(10)-triene-9,17-dione (3,4-DHSA) in the catabolism of cholesterol. This Mycobacterium tuberculosis (strain CDC 1551 / Oshkosh) protein is Flavin-dependent monooxygenase, oxygenase subunit HsaA.